Consider the following 180-residue polypeptide: Large ribosomal subunit protein uL5 (180 aa).

This sequence belongs to the universal ribosomal protein uL5 family. Part of the 50S ribosomal subunit; part of the 5S rRNA/L5/L18/L25 subcomplex. Contacts the 5S rRNA and the P site tRNA. Forms a bridge to the 30S subunit in the 70S ribosome.

Functionally, this is one of the proteins that bind and probably mediate the attachment of the 5S RNA into the large ribosomal subunit, where it forms part of the central protuberance. In the 70S ribosome it contacts protein S13 of the 30S subunit (bridge B1b), connecting the 2 subunits; this bridge is implicated in subunit movement. Contacts the P site tRNA; the 5S rRNA and some of its associated proteins might help stabilize positioning of ribosome-bound tRNAs. The polypeptide is Large ribosomal subunit protein uL5 (Streptococcus suis (strain 05ZYH33)).